The primary structure comprises 377 residues: Tubulin--tyrosine ligase (377 aa).

The TTL domain maps to 3–370 (TFVVRDENSS…PPDVEQPQTQ (368 aa)).

It belongs to the tubulin--tyrosine ligase family. As to quaternary structure, monomer. It depends on Mg(2+) as a cofactor. K(+) serves as cofactor.

It catalyses the reaction C-terminal L-alpha-aminoacyl-L-glutamyl-L-glutamyl-[tubulin] + L-tyrosine + ATP = C-terminal L-alpha-aminoacyl-L-glutamyl-L-glutamyl-L-tyrosyl-[tubulin] + ADP + phosphate + H(+). Its function is as follows. Catalyzes the post-translational addition of a tyrosine to the C-terminal end of detyrosinated alpha-tubulin. The chain is Tubulin--tyrosine ligase (TTL) from Homo sapiens (Human).